Consider the following 171-residue polypeptide: MEIILIKPVRKLGKIGDILKVADGFGRNYLLPQKLAIRATEPNKELIVKQKHEFEAKDKQIREEVEKINALIKDQQLVFIRQTSNDGKLFGSVTNKEVADKLSENISYNISHSNIILDKQIKSTGIYTVEIRLHAELNAIVTVIVARSESEAQDYLREQKTETSEDLAESA.

The protein belongs to the bacterial ribosomal protein bL9 family.

Functionally, binds to the 23S rRNA. The protein is Large ribosomal subunit protein bL9 of Rickettsia africae (strain ESF-5).